A 138-amino-acid chain; its full sequence is Small ribosomal subunit protein uS11c (138 aa).

The protein belongs to the universal ribosomal protein uS11 family. As to quaternary structure, part of the 30S ribosomal subunit.

It is found in the plastid. It localises to the chloroplast. This chain is Small ribosomal subunit protein uS11c, found in Phalaenopsis aphrodite subsp. formosana (Moth orchid).